The chain runs to 282 residues: MLDLLLEPFSYDYMLKAMILSTAVGGICAFLSSYLMLKGWSLIGDALSHSVVPGVAIAYAFALPYALGAFFAGILAALSILWIKSISKLKEDAVIGFIFSTFFALGLLIVSLNPTAVNVQNIILGNILGIADEDIYQVAIIIGVCLVLLLLFWKDLLLIFFDETQAITVGLSPLFYKILFFTLLSACVVAALQTVGAILVIAMVVTPGATAYLLTDKFKTLSIIAIILGAVTSFVGVYISYYLDGATGGVIVTLQTLLFLVAFLFSPKYGLLTRNKKAVENV.

The next 8 membrane-spanning stretches (helical) occupy residues 17-37 (AMIL…YLML), 63-83 (LPYA…ILWI), 93-113 (AVIG…VSLN), 140-160 (IIIG…LLIF), 164-184 (TQAI…FTLL), 186-206 (ACVV…MVVT), 223-243 (IIAI…SYYL), and 245-265 (GATG…AFLF).

The protein belongs to the ABC-3 integral membrane protein family.

The protein resides in the cell inner membrane. Its function is as follows. Part of an ATP-driven transport system HI_0359/HI_0360/HI_0361/HI_0362 for iron. The sequence is that of Probable iron transport system membrane protein HI_0360 from Haemophilus influenzae (strain ATCC 51907 / DSM 11121 / KW20 / Rd).